The sequence spans 120 residues: Small ribosomal subunit protein uS13 (120 aa).

Positions 92-120 (RRGLPCRGQRTRTNARTRKGPRKPIAGKK) are disordered.

The protein belongs to the universal ribosomal protein uS13 family. Part of the 30S ribosomal subunit. Forms a loose heterodimer with protein S19. Forms two bridges to the 50S subunit in the 70S ribosome.

Functionally, located at the top of the head of the 30S subunit, it contacts several helices of the 16S rRNA. In the 70S ribosome it contacts the 23S rRNA (bridge B1a) and protein L5 of the 50S subunit (bridge B1b), connecting the 2 subunits; these bridges are implicated in subunit movement. Contacts the tRNAs in the A and P-sites. This Laribacter hongkongensis (strain HLHK9) protein is Small ribosomal subunit protein uS13.